The primary structure comprises 230 residues: LexA repressor (230 aa).

A DNA-binding region (H-T-H motif) is located at residues 28 to 48 (LREIGAHMGIRSTNGVNDHLR). Residues Ser149 and Lys186 each act as for autocatalytic cleavage activity in the active site.

The protein belongs to the peptidase S24 family. As to quaternary structure, homodimer.

The catalysed reaction is Hydrolysis of Ala-|-Gly bond in repressor LexA.. Functionally, represses a number of genes involved in the response to DNA damage (SOS response), including recA and lexA. In the presence of single-stranded DNA, RecA interacts with LexA causing an autocatalytic cleavage which disrupts the DNA-binding part of LexA, leading to derepression of the SOS regulon and eventually DNA repair. The protein is LexA repressor of Sorangium cellulosum (strain So ce56) (Polyangium cellulosum (strain So ce56)).